Reading from the N-terminus, the 623-residue chain is Membrane protein insertase YidC (623 aa).

The next 5 membrane-spanning stretches (helical) occupy residues 8-28, 379-399, 449-469, 507-527, and 543-563; these read LILA…LFPP, MGLA…PLAY, LPIL…FVTI, TTMA…SMWL, and IFAW…SGLV. The span at 601–617 shows a compositional bias: low complexity; the sequence is KPAAQPAGKAANDGAAP. Residues 601 to 623 are disordered; sequence KPAAQPAGKAANDGAAPAKKRKP.

It belongs to the OXA1/ALB3/YidC family. Type 1 subfamily. In terms of assembly, interacts with the Sec translocase complex via SecD. Specifically interacts with transmembrane segments of nascent integral membrane proteins during membrane integration.

It is found in the cell inner membrane. Functionally, required for the insertion and/or proper folding and/or complex formation of integral membrane proteins into the membrane. Involved in integration of membrane proteins that insert both dependently and independently of the Sec translocase complex, as well as at least some lipoproteins. Aids folding of multispanning membrane proteins. This Cereibacter sphaeroides (strain ATCC 17023 / DSM 158 / JCM 6121 / CCUG 31486 / LMG 2827 / NBRC 12203 / NCIMB 8253 / ATH 2.4.1.) (Rhodobacter sphaeroides) protein is Membrane protein insertase YidC.